Consider the following 517-residue polypeptide: Putative thymidine phosphorylase (517 aa).

Belongs to the thymidine/pyrimidine-nucleoside phosphorylase family. Type 2 subfamily.

The catalysed reaction is thymidine + phosphate = 2-deoxy-alpha-D-ribose 1-phosphate + thymine. This Legionella pneumophila (strain Paris) protein is Putative thymidine phosphorylase.